The chain runs to 151 residues: Large ribosomal subunit protein uL15 (151 aa).

Residues methionine 1 to leucine 60 are disordered.

The protein belongs to the universal ribosomal protein uL15 family. As to quaternary structure, part of the 50S ribosomal subunit.

In terms of biological role, binds to the 23S rRNA. The sequence is that of Large ribosomal subunit protein uL15 from Streptomyces avermitilis (strain ATCC 31267 / DSM 46492 / JCM 5070 / NBRC 14893 / NCIMB 12804 / NRRL 8165 / MA-4680).